The following is a 295-amino-acid chain: Protease HtpX homolog (295 aa).

A run of 2 helical transmembrane segments spans residues 15-35 (LVMAGFVFLAGLIGAAIGYAF) and 39-59 (AQTGIIIAVVVGIVYMFVILG). Residue His-143 coordinates Zn(2+). The active site involves Glu-144. Residue His-147 participates in Zn(2+) binding. The next 2 helical transmembrane spans lie at 159–179 (ALALASVISFLANMGMNAMWW) and 195–215 (VIMLLLSVLAIILGPLAASMA). Glu-224 serves as a coordination point for Zn(2+).

The protein belongs to the peptidase M48B family. It depends on Zn(2+) as a cofactor.

The protein resides in the cell membrane. This Ligilactobacillus salivarius (strain UCC118) (Lactobacillus salivarius) protein is Protease HtpX homolog.